A 352-amino-acid polypeptide reads, in one-letter code: 26S proteasome regulatory subunit rpn-8 (352 aa).

Residues 16-152 (VSVAPLVLLS…TDAYFAVDEI (137 aa)) enclose the MPN domain. The tract at residues 303–352 (NRQQQEENDAKKKEGENGEKKEGADKKEGSPAAANGESKEKENSPKEKKK) is disordered. 2 stretches are compositionally biased toward basic and acidic residues: residues 306–331 (QQEE…KKEG) and 339–352 (ESKE…EKKK).

The protein belongs to the peptidase M67A family.

Its function is as follows. Acts as a regulatory subunit of the 26S proteasome which is involved in the ATP-dependent degradation of ubiquitinated proteins. The chain is 26S proteasome regulatory subunit rpn-8 (rpn-8) from Neurospora crassa (strain ATCC 24698 / 74-OR23-1A / CBS 708.71 / DSM 1257 / FGSC 987).